A 581-amino-acid polypeptide reads, in one-letter code: ATP-dependent lipid A-core flippase (581 aa).

The next 6 membrane-spanning stretches (helical) occupy residues 21–41 (TVAI…ALFI), 65–85 (FVVI…SYCL), 138–158 (ALLI…VMFY), 161–181 (WQLS…VTVV), 246–266 (LSVS…LWVV), and 271–291 (MIDT…MMLL). One can recognise an ABC transmembrane type-1 domain in the interval 24-306 (IVAIIGMIGY…LANVNSDMQR (283 aa)). Residues 338–575 (IEVKNVTFKY…NGTYSALCKM (238 aa)) enclose the ABC transporter domain. Position 372–379 (372–379 (GRSGSGKS)) interacts with ATP.

The protein belongs to the ABC transporter superfamily. Lipid exporter (TC 3.A.1.106) family. In terms of assembly, homodimer.

Its subcellular location is the cell inner membrane. The catalysed reaction is ATP + H2O + lipid A-core oligosaccharideSide 1 = ADP + phosphate + lipid A-core oligosaccharideSide 2.. Functionally, involved in lipopolysaccharide (LPS) biosynthesis. Translocates lipid A-core from the inner to the outer leaflet of the inner membrane. Transmembrane domains (TMD) form a pore in the inner membrane and the ATP-binding domain (NBD) is responsible for energy generation. This chain is ATP-dependent lipid A-core flippase, found in Pseudoalteromonas translucida (strain TAC 125).